Here is a 455-residue protein sequence, read N- to C-terminus: Epoxide hydrolase 1 (455 aa).

The helical; Signal-anchor for type III membrane protein transmembrane segment at 1–21 (MWLELVLASLLGFVIYWFVSR) threads the bilayer. Topologically, residues 22-455 (DKEETLPLGD…RKFVSLAELQ (434 aa)) are cytoplasmic. The Nucleophile role is filled by D226. Dimethylated arginine is present on R295. Y374 acts as the Proton donor in catalysis. H431 (proton acceptor) is an active-site residue. K439 carries the N6-acetyllysine modification.

The protein belongs to the peptidase S33 family.

It is found in the microsome membrane. Its subcellular location is the endoplasmic reticulum membrane. It catalyses the reaction cis-stilbene oxide + H2O = (1R,2R)-hydrobenzoin. The catalysed reaction is 1-(4-methoxyphenyl)-N-methyl-N-[(3-methyloxetan-3-yl)methyl]methanamine + H2O = 2-{[(4-methoxybenzyl)(methyl)amino]methyl}-2-methylpropane-1,3-diol. The enzyme catalyses 8,9-epoxy-(5Z,11Z,14Z)-eicosatrienoate + H2O = 8,9-dihydroxy-(5Z,11Z,14Z)-eicosatrienoate. It carries out the reaction 11,12-epoxy-(5Z,8Z,14Z)-eicosatrienoate + H2O = 11,12-dihydroxy-(5Z,8Z,14Z)-eicosatrienoate. It catalyses the reaction 2-(5Z,8Z,11Z,14Z-eicosatetraenoyl)-glycerol + H2O = glycerol + (5Z,8Z,11Z,14Z)-eicosatetraenoate + H(+). With respect to regulation, inhibited by 10-hydroxystearamide and methoxy-arachidonyl fluorophosphate. Its function is as follows. Biotransformation enzyme that catalyzes the hydrolysis of arene and aliphatic epoxides to less reactive and more water soluble dihydrodiols by the trans addition of water. May play a role in the metabolism of endogenous lipids such as epoxide-containing fatty acids. Metabolizes the abundant endocannabinoid 2-arachidonoylglycerol (2-AG) to free arachidonic acid (AA) and glycerol. Binds 20(S)-hydroxycholesterol (20(S)-OHC). This Rattus norvegicus (Rat) protein is Epoxide hydrolase 1.